Consider the following 161-residue polypeptide: uncharacterized protein (161 aa).

This is an uncharacterized protein from Saccharomyces cerevisiae (strain ATCC 204508 / S288c) (Baker's yeast).